A 735-amino-acid polypeptide reads, in one-letter code: Catalase-peroxidase (735 aa).

Residues 1–26 show a composition bias toward polar residues; sequence MENQNRQNASQCPFHGSITNQSSNRT. The segment at 1-29 is disordered; that stretch reads MENQNRQNASQCPFHGSITNQSSNRTTNK. The segment at residues 100-223 is a cross-link (tryptophyl-tyrosyl-methioninium (Trp-Tyr) (with M-249)); sequence WHSAGTYRIG…LAASVMGLIY (124 aa). Histidine 101 serves as the catalytic Proton acceptor. The segment at residues 223–249 is a cross-link (tryptophyl-tyrosyl-methioninium (Tyr-Met) (with W-100)); the sequence is YVNPEGPDGKPDPKAAARDIRETFRRM. Histidine 264 lines the heme b pocket.

This sequence belongs to the peroxidase family. Peroxidase/catalase subfamily. Homodimer or homotetramer. It depends on heme b as a cofactor. Post-translationally, formation of the three residue Trp-Tyr-Met cross-link is important for the catalase, but not the peroxidase activity of the enzyme.

The enzyme catalyses H2O2 + AH2 = A + 2 H2O. It carries out the reaction 2 H2O2 = O2 + 2 H2O. Bifunctional enzyme with both catalase and broad-spectrum peroxidase activity. In Geobacillus thermodenitrificans (strain NG80-2), this protein is Catalase-peroxidase.